A 100-amino-acid polypeptide reads, in one-letter code: Large ribosomal subunit protein uL23 (100 aa).

This sequence belongs to the universal ribosomal protein uL23 family. Part of the 50S ribosomal subunit. Contacts protein L29, and trigger factor when it is bound to the ribosome.

One of the early assembly proteins it binds 23S rRNA. One of the proteins that surrounds the polypeptide exit tunnel on the outside of the ribosome. Forms the main docking site for trigger factor binding to the ribosome. This is Large ribosomal subunit protein uL23 from Shewanella frigidimarina (strain NCIMB 400).